We begin with the raw amino-acid sequence, 355 residues long: Isopentenyl-diphosphate delta-isomerase (355 aa).

9 to 10 (RK) contributes to the substrate binding site. FMN is bound by residues 67 to 69 (AIT), S97, and N125. 97-99 (SQR) lines the substrate pocket. Q161 serves as a coordination point for substrate. Position 162 (E162) interacts with Mg(2+). Residues K197, T227, 276–278 (GIR), and 297–298 (AL) contribute to the FMN site.

It belongs to the IPP isomerase type 2 family. Homooctamer. Dimer of tetramers. The cofactor is FMN. NADPH serves as cofactor. Requires Mg(2+) as cofactor.

The protein localises to the cytoplasm. It catalyses the reaction isopentenyl diphosphate = dimethylallyl diphosphate. Its function is as follows. Involved in the biosynthesis of isoprenoids. Catalyzes the 1,3-allylic rearrangement of the homoallylic substrate isopentenyl (IPP) to its allylic isomer, dimethylallyl diphosphate (DMAPP). This chain is Isopentenyl-diphosphate delta-isomerase, found in Methanococcus maripaludis (strain DSM 14266 / JCM 13030 / NBRC 101832 / S2 / LL).